We begin with the raw amino-acid sequence, 200 residues long: Small ribosomal subunit protein eS1 (200 aa).

It belongs to the eukaryotic ribosomal protein eS1 family.

This is Small ribosomal subunit protein eS1 from Thermococcus gammatolerans (strain DSM 15229 / JCM 11827 / EJ3).